Reading from the N-terminus, the 184-residue chain is Large ribosomal subunit protein uL6 (184 aa).

Belongs to the universal ribosomal protein uL6 family. Part of the 50S ribosomal subunit.

This protein binds to the 23S rRNA, and is important in its secondary structure. It is located near the subunit interface in the base of the L7/L12 stalk, and near the tRNA binding site of the peptidyltransferase center. This Salinibacter ruber (strain DSM 13855 / M31) protein is Large ribosomal subunit protein uL6.